A 1659-amino-acid chain; its full sequence is Cortactin-binding protein 2 (1659 aa).

Residues 1–23 (MATDGASCEPDLSRAPEDAAGAA) are disordered. Positions 119 to 276 (RKMQERMSAQ…EQLKRGSDSK (158 aa)) form a coiled coil. Disordered regions lie at residues 324-436 (LTMP…LHPG) and 450-474 (GNAN…SPTS). Low complexity-rich tracts occupy residues 337–348 (ASANAKGSAAMA) and 381–392 (GPSTGLTPDPTS). Polar residues predominate over residues 405–418 (TAQTPGITPQNSQA). The residue at position 494 (Arg494) is an Asymmetric dimethylarginine. The tract at residues 495-612 (FTGPQAGAPP…SSPQLPPKPS (118 aa)) is disordered. Positions 579 to 589 (TVASPPSSLPQ) are enriched in polar residues. ANK repeat units lie at residues 705-735 (GRPT…DINY), 739-768 (DGHS…QVNA), 772-801 (NGFT…NINH), 805-834 (GGQT…DRNV), and 838-867 (DGWT…PAHG). The segment at 869-893 (SFSEEESESGVFDLDGGGESPEGKS) is disordered. An ANK 6 repeat occupies 908 to 938 (EGWTAAHIAASKGFKNCLEILCRHGGLETER). A disordered region spans residues 1443 to 1478 (KKKGESGAWRKVNTSPRRKSGRFSLPTWNKPDLSTE). At Ser1520 the chain carries Phosphoserine. Residues 1613–1659 (RSKVTQCSQNTKRNSSSSNTRQIEINNNSKEENWNLHKNEHLEKPNK) form a disordered region. Positions 1620–1634 (SQNTKRNSSSSNTRQ) are enriched in low complexity. Residues 1641 to 1659 (SKEENWNLHKNEHLEKPNK) are compositionally biased toward basic and acidic residues.

Interacts with CTTN/cortactin SH3 domain. Interacts with STRN, STRN4/zinedin and MOB4/phocein; this interactions mediate the association with the STRIPAK core complex and may regulate dendritic spine distribution of the STRIPAK complex in hippocampal neurons. Activation of glutamate receptors weakens the interaction with STRN and STRN4.

It is found in the cytoplasm. The protein resides in the cell cortex. The protein localises to the cell projection. It localises to the dendritic spine. Its function is as follows. Regulates the dendritic spine distribution of CTTN/cortactin in hippocampal neurons, and thus controls dendritic spinogenesis and dendritic spine maintenance. Associates with the striatin-interacting phosphatase and kinase (STRIPAK) core complex to regulate dendritic spine distribution of the STRIPAK complex in hippocampal neurons. In Saimiri boliviensis boliviensis (Bolivian squirrel monkey), this protein is Cortactin-binding protein 2 (CTTNBP2).